The primary structure comprises 222 residues: U-scoloptoxin(11)-Sm5a (222 aa).

It belongs to the scoloptoxin-11 family. In terms of processing, contains 8 disulfide bonds. Expressed by the venom gland.

Its subcellular location is the secreted. The sequence is that of U-scoloptoxin(11)-Sm5a from Scolopendra morsitans (Tanzanian blue ringleg centipede).